The following is a 453-amino-acid chain: Magnesium transporter MgtE (453 aa).

Residues Met-1–Arg-286 lie on the Cytoplasmic side of the membrane. Mg(2+)-binding residues include Glu-71, Asp-98, Asp-102, Glu-136, Ala-140, Tyr-176, Arg-227, Asp-230, Ala-233, Asp-251, and Glu-259. 2 consecutive CBS domains span residues Met-142–Ile-205 and Leu-206–Ser-262. A helical transmembrane segment spans residues Leu-287–Tyr-307. Position 308 (Glu-308) is a topological domain, extracellular. A helical membrane pass occupies residues Ser-309–Gly-329. Residues Asn-330–Glu-360 lie on the Cytoplasmic side of the membrane. The helical transmembrane segment at Val-361–Val-381 threads the bilayer. Residues Trp-382–Gly-389 are Extracellular-facing. Residues Phe-390–Ile-410 traverse the membrane as a helical segment. Residues Pro-411–Pro-427 lie on the Cytoplasmic side of the membrane. A helical membrane pass occupies residues Phe-428 to Phe-448. Residue Asp-434 participates in Mg(2+) binding. The Extracellular segment spans residues Met-449–Val-453.

It belongs to the SLC41A transporter family. In terms of assembly, homodimer.

It is found in the cell membrane. The catalysed reaction is Mg(2+)(in) = Mg(2+)(out). Its function is as follows. Acts as a magnesium transporter. The sequence is that of Magnesium transporter MgtE from Enterococcus faecalis (strain ATCC 700802 / V583).